Consider the following 183-residue polypeptide: Apo-citrate lyase phosphoribosyl-dephospho-CoA transferase (183 aa).

This sequence belongs to the CitX family.

The catalysed reaction is apo-[citrate lyase ACP] + 2'-(5''-triphospho-alpha-D-ribosyl)-3'-dephospho-CoA = holo-[citrate lyase ACP] + diphosphate. Transfers 2-(5''-triphosphoribosyl)-3'-dephosphocoenzyme-A on a serine residue to the apo-acyl carrier protein (gamma chain) of the citrate lyase to yield holo-acyl carrier protein. This is Apo-citrate lyase phosphoribosyl-dephospho-CoA transferase from Escherichia coli O45:K1 (strain S88 / ExPEC).